The chain runs to 356 residues: Dihydroorotate dehydrogenase (quinone) (356 aa).

FMN is bound by residues 67 to 71 and T91; that span reads PGFDK. Residue K71 participates in substrate binding. 116-120 is a substrate binding site; the sequence is NRMGF. Residues N147 and N178 each coordinate FMN. N178 contributes to the substrate binding site. S181 functions as the Nucleophile in the catalytic mechanism. Residue N183 participates in substrate binding. Positions 218 and 246 each coordinate FMN. 247–248 lines the substrate pocket; sequence NT. Residues G268, G297, and 318–319 contribute to the FMN site; that span reads YS.

It belongs to the dihydroorotate dehydrogenase family. Type 2 subfamily. Monomer. It depends on FMN as a cofactor.

Its subcellular location is the cell membrane. The catalysed reaction is (S)-dihydroorotate + a quinone = orotate + a quinol. It participates in pyrimidine metabolism; UMP biosynthesis via de novo pathway; orotate from (S)-dihydroorotate (quinone route): step 1/1. Its function is as follows. Catalyzes the conversion of dihydroorotate to orotate with quinone as electron acceptor. This Sphingopyxis alaskensis (strain DSM 13593 / LMG 18877 / RB2256) (Sphingomonas alaskensis) protein is Dihydroorotate dehydrogenase (quinone).